Here is a 284-residue protein sequence, read N- to C-terminus: ATP phosphoribosyltransferase (284 aa).

It belongs to the ATP phosphoribosyltransferase family. Long subfamily. The cofactor is Mg(2+).

It localises to the cytoplasm. The catalysed reaction is 1-(5-phospho-beta-D-ribosyl)-ATP + diphosphate = 5-phospho-alpha-D-ribose 1-diphosphate + ATP. It participates in amino-acid biosynthesis; L-histidine biosynthesis; L-histidine from 5-phospho-alpha-D-ribose 1-diphosphate: step 1/9. Feedback inhibited by histidine. Its function is as follows. Catalyzes the condensation of ATP and 5-phosphoribose 1-diphosphate to form N'-(5'-phosphoribosyl)-ATP (PR-ATP). Has a crucial role in the pathway because the rate of histidine biosynthesis seems to be controlled primarily by regulation of HisG enzymatic activity. The chain is ATP phosphoribosyltransferase from Methanococcoides burtonii (strain DSM 6242 / NBRC 107633 / OCM 468 / ACE-M).